The sequence spans 784 residues: E3 UFM1-protein ligase 1 homolog (784 aa).

Positions 398–414 (QEVDHGVMEEEKADKRE) are enriched in basic and acidic residues. Residues 398–472 (QEVDHGVMEE…ASNKKGGKDP (75 aa)) form a disordered region.

It belongs to the UFL1 family.

E3 UFM1-protein ligase that mediates ufmylation of target proteins. The protein is E3 UFM1-protein ligase 1 homolog of Anopheles gambiae (African malaria mosquito).